The primary structure comprises 208 residues: MKIVEVKHPLVKHKLGLMREHDISTKRFRELASEVGSLLTYEATADLETEKVTIEGWNGPVEVEQIKGKKITVVPILRAGLGMMEGVLEHVPSARISVVGIYRNEETLEPVPYFQKLVSNIDERMALVVDPMLATGGSMIATIDLLKNAGCTSIKVLVLVAAPEGIAALEKAHPDVELYTASVDKGLNEHGYIIPGLGDAGDKIFGTK.

Residues arginine 78, arginine 103, and 130–138 (DPMLATGGS) each bind 5-phospho-alpha-D-ribose 1-diphosphate. Uracil is bound by residues isoleucine 193 and 198 to 200 (GDA). Aspartate 199 contacts 5-phospho-alpha-D-ribose 1-diphosphate.

This sequence belongs to the UPRTase family. Mg(2+) serves as cofactor.

It catalyses the reaction UMP + diphosphate = 5-phospho-alpha-D-ribose 1-diphosphate + uracil. The protein operates within pyrimidine metabolism; UMP biosynthesis via salvage pathway; UMP from uracil: step 1/1. With respect to regulation, allosterically activated by GTP. Functionally, catalyzes the conversion of uracil and 5-phospho-alpha-D-ribose 1-diphosphate (PRPP) to UMP and diphosphate. In Klebsiella pneumoniae subsp. pneumoniae (strain ATCC 700721 / MGH 78578), this protein is Uracil phosphoribosyltransferase.